A 130-amino-acid chain; its full sequence is Small ribosomal subunit protein bS6 (130 aa).

The segment at 99–130 is disordered; it reads ASPMVKAKDERRERHDFASEANDDSEAGDSEE. Basic and acidic residues predominate over residues 104 to 116; that stretch reads KAKDERRERHDFA. Acidic residues predominate over residues 119 to 130; that stretch reads ANDDSEAGDSEE.

Belongs to the bacterial ribosomal protein bS6 family.

Its function is as follows. Binds together with bS18 to 16S ribosomal RNA. The polypeptide is Small ribosomal subunit protein bS6 (Yersinia enterocolitica serotype O:8 / biotype 1B (strain NCTC 13174 / 8081)).